The primary structure comprises 714 residues: G protein-coupled receptor kinase 2 (714 aa).

Positions 1–308 (MELENIVANT…LEAQPITYKT (308 aa)) are N-terminal. RGS domains lie at 53–174 (YGYV…SQHS) and 177–294 (INHK…HRYL). A disordered region spans residues 141–229 (SNANPTETAE…GGGEGGGGGK (89 aa)). The segment covering 154-175 (CNNTTANNCNNINNSNNSQHSS) has biased composition (low complexity). 2 stretches are compositionally biased toward basic and acidic residues: residues 176-190 (DINH…HNGD) and 199-220 (HQDD…EKGG). The Protein kinase domain maps to 309–574 (FRMYRVLGKG…GQDVMAHPFF (266 aa)). ATP-binding positions include 315–323 (LGKGGFGEV) and Lys338. The active-site Proton acceptor is the Asp435. Positions 577-642 (TQLNWRRLEA…GSVSISWQNE (66 aa)) constitute an AGC-kinase C-terminal domain. Residue Ser612 is modified to Phosphoserine. A Phosphothreonine modification is found at Thr613. The disordered stretch occupies residues 667-714 (INAAPEPDKAGCFPFRRKKKQPARTQPIPIPEHLLTTSHSVSSTTVES). The span at 698–714 (EHLLTTSHSVSSTTVES) shows a compositional bias: low complexity.

Belongs to the protein kinase superfamily. AGC Ser/Thr protein kinase family. GPRK subfamily. In terms of tissue distribution, expressed in all larval tissues and in adult ovaries. Larval CNS staining is localized to axons projecting to the optic lobes and the mushroom bodies, in the longitudinal connectives, and in cell bodies and nerves of the ring gland corpus allatum. Adult CNS staining is detectable only in cell bodies and processes associated with the ellipsoid body of the central complex and portions of the mushroom bodies. In the wing disk, expression is confined to a stripe that parallels the anterior/posterior boundary of the wing blade and the hinge region, and weak expression in the prospective notum.

Its subcellular location is the membrane. It catalyses the reaction [G-protein-coupled receptor] + ATP = [G-protein-coupled receptor]-phosphate + ADP + H(+). Functionally, specifically phosphorylates the activated forms of G protein-coupled receptors. Required during oogenesis and embryogenesis; component of a signaling pathway that functions during egg chamber maturation. In Drosophila melanogaster (Fruit fly), this protein is G protein-coupled receptor kinase 2 (Gprk2).